The following is a 716-amino-acid chain: MIYQSPTIQVELLEDNIAKLCFNAPGSVNKFDRETLASLDAALDSIKQQSNIQALVLTSGKDTFIVGADITEFLGLFAQDDAVLLSWIEQANAVFNKLEDLPFPTASAIKGFALGGGCETILATDFRIADTTAKIGLPETKLGIIPGFGGTVRLPRVIGADNALEWITTGKDQRPEDALKVGAVDAVVAPEALEAAAIQMLKDAVAEKLDWQARRQRKMSPLTLPKLEAMMSFTTAKGMVFAVAGKHYPAPMAAVSVVEQAATKGRSDALQIEHQAFIKLAKTDVAKALIGIFLNDQLVKGKAKKAGKLAKDVKSAAVLGAGIMGGGIAYQSASKGTPIVMKDIAQPALDLGLGEAAKLLSAQVARGRSTPEKMAKVLNNITPALDYAPVKHADVVVEAVVEHPKVKAQVLAEVEQYVSEDAIIASNTSTISINLLAKSMKKPERFCGMHFFNPVHKMPLVEVIRGEHSSEETIASVVAYASKMGKTPIVVNDCPGFFVNRVLFPYFAGFNGLLAEGGDFAAIDKVMEKQFGWPMGPAYLLDVVGLDTGHHAQAVMAEGFPDRMGKSGNDAIDVMFENKRLGQKNGKGFYAYSVDSRGKPKKDVDPTSYELLKAAFGEQKAFDADEIIARTMIPMIIETVRCLEEGIVASPAEADMGLVYGLGFPPFRGGVFRYLDTMGVANFVALADKYAHLGGLYQVTDAMRALAANNGSYYQA.

Residues 1-189 (MIYQSPTIQV…KVGAVDAVVA (189 aa)) form an enoyl-CoA hydratase/isomerase region. Aspartate 296 serves as a coordination point for substrate. The 3-hydroxyacyl-CoA dehydrogenase stretch occupies residues 311–716 (KDVKSAAVLG…AANNGSYYQA (406 aa)). NAD(+) contacts are provided by residues methionine 324, aspartate 343, 400-402 (VVE), lysine 407, and serine 429. The For 3-hydroxyacyl-CoA dehydrogenase activity role is filled by histidine 450. Residue asparagine 453 participates in NAD(+) binding. Substrate contacts are provided by asparagine 500 and tyrosine 660.

It in the N-terminal section; belongs to the enoyl-CoA hydratase/isomerase family. This sequence in the C-terminal section; belongs to the 3-hydroxyacyl-CoA dehydrogenase family. As to quaternary structure, heterotetramer of two alpha chains (FadB) and two beta chains (FadA).

The catalysed reaction is a (3S)-3-hydroxyacyl-CoA + NAD(+) = a 3-oxoacyl-CoA + NADH + H(+). The enzyme catalyses a (3S)-3-hydroxyacyl-CoA = a (2E)-enoyl-CoA + H2O. It carries out the reaction a 4-saturated-(3S)-3-hydroxyacyl-CoA = a (3E)-enoyl-CoA + H2O. It catalyses the reaction (3S)-3-hydroxybutanoyl-CoA = (3R)-3-hydroxybutanoyl-CoA. The catalysed reaction is a (3Z)-enoyl-CoA = a 4-saturated (2E)-enoyl-CoA. The enzyme catalyses a (3E)-enoyl-CoA = a 4-saturated (2E)-enoyl-CoA. Its pathway is lipid metabolism; fatty acid beta-oxidation. Involved in the aerobic and anaerobic degradation of long-chain fatty acids via beta-oxidation cycle. Catalyzes the formation of 3-oxoacyl-CoA from enoyl-CoA via L-3-hydroxyacyl-CoA. It can also use D-3-hydroxyacyl-CoA and cis-3-enoyl-CoA as substrate. The polypeptide is Fatty acid oxidation complex subunit alpha (Shewanella sp. (strain ANA-3)).